Reading from the N-terminus, the 839-residue chain is Protein translocase subunit SecA (839 aa).

Residues Q85, 103-107 (GEGKT), and D493 contribute to the ATP site. Basic and acidic residues predominate over residues 780–790 (QIHEQERERAS). A disordered region spans residues 780-839 (QIHEQERERASQRATTAAPQNIQSQQSANTDDLPKVERNEACPCGSGKKFKNCHGRKSFS). Over residues 791–809 (QRATTAAPQNIQSQQSANT) the composition is skewed to polar residues. Zn(2+)-binding residues include C821, C823, C832, and H833. The span at 827–839 (KKFKNCHGRKSFS) shows a compositional bias: basic residues.

It belongs to the SecA family. Monomer and homodimer. Part of the essential Sec protein translocation apparatus which comprises SecA, SecYEG and auxiliary proteins SecDF. Other proteins may also be involved. It depends on Zn(2+) as a cofactor.

It localises to the cell membrane. Its subcellular location is the cytoplasm. It catalyses the reaction ATP + H2O + cellular proteinSide 1 = ADP + phosphate + cellular proteinSide 2.. Part of the Sec protein translocase complex. Interacts with the SecYEG preprotein conducting channel. Has a central role in coupling the hydrolysis of ATP to the transfer of proteins into and across the cell membrane, serving as an ATP-driven molecular motor driving the stepwise translocation of polypeptide chains across the membrane. In Streptococcus pyogenes serotype M3 (strain ATCC BAA-595 / MGAS315), this protein is Protein translocase subunit SecA.